Consider the following 763-residue polypeptide: Thyrotropin receptor (763 aa).

A signal peptide spans 1–21 (MRQTPLLQLALLLSLPRSLGG). The Extracellular portion of the chain corresponds to 22 to 412 (KGCPSPPCEC…EFNPCEDIMG (391 aa)). Residues cysteine 31 and cysteine 41 are joined by a disulfide bond. Residues asparagine 77 and asparagine 99 are each glycosylated (N-linked (GlcNAc...) asparagine). LRR repeat units follow at residues 100–124 (LSKMTHIEIRNTRSLTYIDPGALKE), 125–150 (LPLLKFLGIFNTGLGVFPDLTKVYST), 151–174 (DVFFILEITDNPYMTSIPANAFQG), 176–199 (CNETLTLKLYNNGFTSIQGHAFNG), 201–223 (KLDAVYLNKNKYLTAIDQDAFGG), 225–248 (YSGPTLLDVSYTSVTALPSKGLEH), and 264–288 (PLTLSFLHLTRADLSYPSHCCAFKN). Residues asparagine 177 and asparagine 198 are each glycosylated (N-linked (GlcNAc...) asparagine). Residue asparagine 302 is glycosylated (N-linked (GlcNAc...) asparagine). Tyrosine 384 bears the Sulfotyrosine mark. A helical membrane pass occupies residues 413–440 (YKFLRIVVWFVSLLALLGNVFVLIILLT). The Cytoplasmic portion of the chain corresponds to 441–449 (SHYKLTVPR). A helical membrane pass occupies residues 450-472 (FLMCNLAFADFCMGMYLLLIASV). At 473-493 (DLYTHSEYYNHAIDWQTGPGC) the chain is on the extracellular side. A disulfide bond links cysteine 493 and cysteine 568. A helical transmembrane segment spans residues 494–516 (NAAGFFTVFASELSVYTLTVITL). The Cytoplasmic segment spans residues 517 to 536 (ERWYAITFAMRLDRKMRLRH). The helical transmembrane segment at 537 to 559 (AYAIMVGGWVCCFLLALLPLVGI) threads the bilayer. The Extracellular segment spans residues 560–579 (SSYAKVSICLPMDTETPLAL). The helical transmembrane segment at 580 to 601 (AYIILVLLLNIVAFIIVCSCYV) threads the bilayer. Over 602-624 (KIYITVRNPQYNTGDKDTKIAKR) the chain is Cytoplasmic. A helical membrane pass occupies residues 625-648 (MAVLIFTDFMCMAPISFYALSALM). Residues 649-659 (NKPLITVTNSK) are Extracellular-facing. The chain crosses the membrane as a helical span at residues 660–681 (ILLVLFYPLNSCANPFLYAIFT). The Cytoplasmic segment spans residues 682–763 (KTFQRDVFIL…ISKEYNQTVL (82 aa)). The short motif at 761-763 (TVL) is the PDZ-binding element.

This sequence belongs to the G-protein coupled receptor 1 family. FSH/LSH/TSH subfamily. Interacts with heterodimer GPHA2:GPHB5; this interaction stimulates cAMP production. Interacts (via the PDZ-binding motif) with SCRIB; regulates TSHR trafficking and function. In terms of processing, glycosylated. Post-translationally, sulfated. Sulfation on Tyr-384 plays a role in thyrotropin receptor binding and activation.

Its subcellular location is the cell membrane. It localises to the basolateral cell membrane. In terms of biological role, receptor for the thyroid-stimulating hormone (TSH) or thyrotropin. Also acts as a receptor for the heterodimeric glycoprotein hormone (GPHA2:GPHB5) or thyrostimulin. The activity of this receptor is mediated by G proteins which activate adenylate cyclase. Plays a central role in controlling thyroid cell metabolism. This is Thyrotropin receptor (TSHR) from Felis catus (Cat).